Reading from the N-terminus, the 620-residue chain is Glutathione-regulated potassium-efflux system protein KefC (620 aa).

12 helical membrane passes run 4 to 24, 26 to 46, 54 to 74, 86 to 106, 114 to 134, 149 to 169, 178 to 198, 218 to 238, 271 to 291, 296 to 316, 326 to 346, and 359 to 379; these read HTLI…PVAV, LGLG…PWGL, AILH…GLEL, VFGG…GFCV, VALL…MQAM, FAVL…IPLL, ASAF…VVLL, VFSA…EEAG, LLLG…TLVA, VLTL…LVAK, RWFA…FGAA, and ALTL…VLLT. Positions 399-518 constitute an RCK N-terminal domain; it reads QPRVIIAGFG…AGVAQPERET (120 aa). The tract at residues 596–620 is disordered; sequence HGWQGTREGKHTGNDADEPEVKPQP.

The protein belongs to the monovalent cation:proton antiporter 2 (CPA2) transporter (TC 2.A.37) family. KefC subfamily. As to quaternary structure, homodimer. Interacts with the regulatory subunit KefF.

The protein localises to the cell inner membrane. Its function is as follows. Pore-forming subunit of a potassium efflux system that confers protection against electrophiles. Catalyzes K(+)/H(+) antiport. The polypeptide is Glutathione-regulated potassium-efflux system protein KefC (Cronobacter sakazakii (strain ATCC BAA-894) (Enterobacter sakazakii)).